We begin with the raw amino-acid sequence, 337 residues long: MTLLDETASAQFGDDVAPTEEWAAEVRRLARQRGATLLAHNYQLPAIQDVADHVGDSLALSRIAAEAPEDTIVFCGVHFMAETAKILSPDKTVLIPDARAGCSLADSITADQLREWKAEYPGAVVVSYVNTTAAVKAETDICCTSSNAVDVVASIPADREVLFCPDQFLGAHVRRVTGRTNMQIWAGECHVHAGINGDELADQARAHPDAELFVHPECGCATSALYLAGEGAFPADRVKILSTGGMLDAARESRASQVLVATEVGMLHQLRRAAPEIDFQAVNDRASCRYMKMITPAALLRCLTYGTDEVDVDHETARLARRSVQRMIEIGQPGGGE.

Residues His40 and Ser57 each coordinate iminosuccinate. [4Fe-4S] cluster is bound at residue Cys102. Residues 128–130 (YVN) and Ser145 contribute to the iminosuccinate site. Residue Cys189 participates in [4Fe-4S] cluster binding. Iminosuccinate-binding positions include 215 to 217 (HPE) and Thr243. Cys288 provides a ligand contact to [4Fe-4S] cluster.

The protein belongs to the quinolinate synthase family. Type 2 subfamily. Requires [4Fe-4S] cluster as cofactor.

It is found in the cytoplasm. The catalysed reaction is iminosuccinate + dihydroxyacetone phosphate = quinolinate + phosphate + 2 H2O + H(+). Its pathway is cofactor biosynthesis; NAD(+) biosynthesis; quinolinate from iminoaspartate: step 1/1. In terms of biological role, catalyzes the condensation of iminoaspartate with dihydroxyacetone phosphate to form quinolinate. This is Quinolinate synthase from Mycobacterium sp. (strain JLS).